The sequence spans 833 residues: DNA ligase (833 aa).

Residues 35–39, 84–85, and E115 contribute to the NAD(+) site; these read DADYD and SL. The active-site N6-AMP-lysine intermediate is K117. NAD(+) is bound by residues R138, E175, K292, and K316. The Zn(2+) site is built by C410, C413, C428, and C434. Residues 750 to 833 form the BRCT domain; the sequence is EKTGPLDGQT…AFLGDHGQQP (84 aa).

It belongs to the NAD-dependent DNA ligase family. LigA subfamily. Mg(2+) serves as cofactor. The cofactor is Mn(2+).

It carries out the reaction NAD(+) + (deoxyribonucleotide)n-3'-hydroxyl + 5'-phospho-(deoxyribonucleotide)m = (deoxyribonucleotide)n+m + AMP + beta-nicotinamide D-nucleotide.. In terms of biological role, DNA ligase that catalyzes the formation of phosphodiester linkages between 5'-phosphoryl and 3'-hydroxyl groups in double-stranded DNA using NAD as a coenzyme and as the energy source for the reaction. It is essential for DNA replication and repair of damaged DNA. The polypeptide is DNA ligase (Xanthomonas axonopodis pv. citri (strain 306)).